The primary structure comprises 257 residues: Probable pectate lyase E (257 aa).

The signal sequence occupies residues 1–17; that stretch reads MYQKLLLVPLLLTSALA.

It belongs to the polysaccharide lyase 3 family. The cofactor is Ca(2+).

The protein localises to the secreted. It carries out the reaction Eliminative cleavage of (1-&gt;4)-alpha-D-galacturonan to give oligosaccharides with 4-deoxy-alpha-D-galact-4-enuronosyl groups at their non-reducing ends.. Functionally, pectinolytic enzyme consist of four classes of enzymes: pectin lyase, polygalacturonase, pectin methylesterase and rhamnogalacturonase. Among pectinolytic enzymes, pectin lyase is the most important in depolymerization of pectin, since it cleaves internal glycosidic bonds of highly methylated pectins. Favors pectate, the anion, over pectin, the methyl ester. In Aspergillus flavus (strain ATCC 200026 / FGSC A1120 / IAM 13836 / NRRL 3357 / JCM 12722 / SRRC 167), this protein is Probable pectate lyase E (plyE).